The primary structure comprises 257 residues: Origin recognition complex subunit 6 (257 aa).

Residues 186–222 (HKESKVPSSTDMEGKLKENQNENIKGHEAKKAHKPPP) form a disordered region. A compositionally biased stretch (basic and acidic residues) spans 197 to 222 (MEGKLKENQNENIKGHEAKKAHKPPP).

This sequence belongs to the ORC6 family. As to quaternary structure, ORC is composed of six subunits.

It is found in the nucleus. Its function is as follows. Component of the origin recognition complex (ORC) that binds origins of replication. DNA-binding is ATP-dependent, however specific DNA sequences that define origins of replication have not been identified so far. ORC is required to assemble the pre-replication complex necessary to initiate DNA replication. The protein is Origin recognition complex subunit 6 (Orc6) of Drosophila melanogaster (Fruit fly).